The primary structure comprises 194 residues: MIGRLRGILAYKQPPWLVIDVGGVGYELEAPMSTFYDLPDVGRDVILFTHYAQKEDSVSLYGFLREGERRLFRDVQKVTGIGAKIALAVLSGVSVDEFARLITSGDITALTRIPGIGKKTAERMVVELRDRAADFSSGAPITGQLGPDAVSEATVALQQLGYKPAEAARMARDAGAEGDEVATVIRKALQAALR.

Residues methionine 1–leucine 64 are domain I. The interval arginine 65 to proline 140 is domain II. Residues proline 140 to glutamine 144 form a flexible linker region. Positions leucine 145–arginine 194 are domain III.

The protein belongs to the RuvA family. As to quaternary structure, homotetramer. Forms an RuvA(8)-RuvB(12)-Holliday junction (HJ) complex. HJ DNA is sandwiched between 2 RuvA tetramers; dsDNA enters through RuvA and exits via RuvB. An RuvB hexamer assembles on each DNA strand where it exits the tetramer. Each RuvB hexamer is contacted by two RuvA subunits (via domain III) on 2 adjacent RuvB subunits; this complex drives branch migration. In the full resolvosome a probable DNA-RuvA(4)-RuvB(12)-RuvC(2) complex forms which resolves the HJ.

The protein localises to the cytoplasm. The RuvA-RuvB-RuvC complex processes Holliday junction (HJ) DNA during genetic recombination and DNA repair, while the RuvA-RuvB complex plays an important role in the rescue of blocked DNA replication forks via replication fork reversal (RFR). RuvA specifically binds to HJ cruciform DNA, conferring on it an open structure. The RuvB hexamer acts as an ATP-dependent pump, pulling dsDNA into and through the RuvAB complex. HJ branch migration allows RuvC to scan DNA until it finds its consensus sequence, where it cleaves and resolves the cruciform DNA. The protein is Holliday junction branch migration complex subunit RuvA of Xanthomonas axonopodis pv. citri (strain 306).